Reading from the N-terminus, the 114-residue chain is MTTIGPIENEIKELLTKELNPINLEIINESYMHNVPKGSESHFKVKIVSEKFETLSMIEQHRLVNEILKNFIGNGKIHALSITSRTPTQWKKNNQTKINVDDDKSPSCKGGFGK.

Residues 88 to 98 (TQWKKNNQTKI) show a composition bias toward polar residues. Residues 88-114 (TQWKKNNQTKINVDDDKSPSCKGGFGK) are disordered.

It belongs to the BolA/IbaG family.

The chain is BolA-like protein DDB_G0274169 from Dictyostelium discoideum (Social amoeba).